The chain runs to 760 residues: Protein P1 (760 aa).

The first 33 residues, 1 to 33, serve as a signal peptide directing secretion; it reads MASFLKPVNSQGLWLSLLLAITYLFLLPSAGQS. A run of 4 helical transmembrane segments spans residues 172-192, 194-214, 218-235, and 240-260; these read LIEFVLVSWSLWLCSVLVYVA, AVPGKFLLYMAAFCTTFWAWP, ASSLIRIVTTPLTLIGFL, and IGLISHCLALTWNMFMTWSLL. In terms of domain architecture, Peptidase S39 spans 318–515; it reads IPGVQIKKLR…SSSPKFTGCE (198 aa). Residues H366, D396, and S465 each act as for protease activity in the active site. 2 disordered regions span residues 572 to 672 and 684 to 760; these read GLWA…LSQV and LTVQ…PRRN. Positions 621 to 643 are enriched in basic and acidic residues; it reads RAEKVRHVRRSEMTPEQKRADNL.

It belongs to the peptidase S39B family. In terms of processing, specific enzymatic cleavages in vivo yield mature proteins. The protease probably cleaves itself and releases the VPg protein.

The protein localises to the membrane. Functionally, precursor from which the VPg molecule is probably released at the onset of the RNA synthesis. Essential for virus replication. The polypeptide is Protein P1 (Pea enation mosaic virus-1 (strain WSG) (PEMV-1)).